A 460-amino-acid chain; its full sequence is ATP synthase subunit beta (460 aa).

Residue 150 to 157 participates in ATP binding; that stretch reads GGAGVGKT.

The protein belongs to the ATPase alpha/beta chains family. As to quaternary structure, F-type ATPases have 2 components, CF(1) - the catalytic core - and CF(0) - the membrane proton channel. CF(1) has five subunits: alpha(3), beta(3), gamma(1), delta(1), epsilon(1). CF(0) has three main subunits: a(1), b(2) and c(9-12). The alpha and beta chains form an alternating ring which encloses part of the gamma chain. CF(1) is attached to CF(0) by a central stalk formed by the gamma and epsilon chains, while a peripheral stalk is formed by the delta and b chains.

It is found in the cell inner membrane. It catalyses the reaction ATP + H2O + 4 H(+)(in) = ADP + phosphate + 5 H(+)(out). Produces ATP from ADP in the presence of a proton gradient across the membrane. The catalytic sites are hosted primarily by the beta subunits. The protein is ATP synthase subunit beta of Erwinia tasmaniensis (strain DSM 17950 / CFBP 7177 / CIP 109463 / NCPPB 4357 / Et1/99).